A 388-amino-acid chain; its full sequence is Succinate--CoA ligase [ADP-forming] subunit beta (388 aa).

The ATP-grasp domain occupies 9–244 (KQLFARYGLP…PSQEDSREAH (236 aa)). Residues Lys-46, 53–55 (GRG), Glu-99, Thr-102, and Glu-107 each bind ATP. Asn-199 and Asp-213 together coordinate Mg(2+). Residues Asn-264 and 321–323 (GIV) each bind substrate.

This sequence belongs to the succinate/malate CoA ligase beta subunit family. As to quaternary structure, heterotetramer of two alpha and two beta subunits. Requires Mg(2+) as cofactor.

The catalysed reaction is succinate + ATP + CoA = succinyl-CoA + ADP + phosphate. It carries out the reaction GTP + succinate + CoA = succinyl-CoA + GDP + phosphate. It participates in carbohydrate metabolism; tricarboxylic acid cycle; succinate from succinyl-CoA (ligase route): step 1/1. Its function is as follows. Succinyl-CoA synthetase functions in the citric acid cycle (TCA), coupling the hydrolysis of succinyl-CoA to the synthesis of either ATP or GTP and thus represents the only step of substrate-level phosphorylation in the TCA. The beta subunit provides nucleotide specificity of the enzyme and binds the substrate succinate, while the binding sites for coenzyme A and phosphate are found in the alpha subunit. The protein is Succinate--CoA ligase [ADP-forming] subunit beta of Pectobacterium atrosepticum (strain SCRI 1043 / ATCC BAA-672) (Erwinia carotovora subsp. atroseptica).